Here is a 280-residue protein sequence, read N- to C-terminus: Formamidopyrimidine-DNA glycosylase (280 aa).

The Schiff-base intermediate with DNA role is filled by Pro-2. Residue Glu-3 is the Proton donor of the active site. Lys-58 functions as the Proton donor; for beta-elimination activity in the catalytic mechanism. His-91, Arg-110, and Arg-152 together coordinate DNA. Residues 237-271 (NVYGRENLPCPQCDSAIEKVVLNQRAAYFCSNCQK) form an FPG-type zinc finger. Residue Arg-261 is the Proton donor; for delta-elimination activity of the active site.

Belongs to the FPG family. As to quaternary structure, monomer. Zn(2+) serves as cofactor.

It catalyses the reaction Hydrolysis of DNA containing ring-opened 7-methylguanine residues, releasing 2,6-diamino-4-hydroxy-5-(N-methyl)formamidopyrimidine.. The catalysed reaction is 2'-deoxyribonucleotide-(2'-deoxyribose 5'-phosphate)-2'-deoxyribonucleotide-DNA = a 3'-end 2'-deoxyribonucleotide-(2,3-dehydro-2,3-deoxyribose 5'-phosphate)-DNA + a 5'-end 5'-phospho-2'-deoxyribonucleoside-DNA + H(+). In terms of biological role, involved in base excision repair of DNA damaged by oxidation or by mutagenic agents. Acts as a DNA glycosylase that recognizes and removes damaged bases. Has a preference for oxidized purines, such as 7,8-dihydro-8-oxoguanine (8-oxoG). Has AP (apurinic/apyrimidinic) lyase activity and introduces nicks in the DNA strand. Cleaves the DNA backbone by beta-delta elimination to generate a single-strand break at the site of the removed base with both 3'- and 5'-phosphates. The sequence is that of Formamidopyrimidine-DNA glycosylase from Hydrogenovibrio crunogenus (strain DSM 25203 / XCL-2) (Thiomicrospira crunogena).